Consider the following 440-residue polypeptide: GTPase Der (440 aa).

EngA-type G domains follow at residues 4–168 (PIVA…PENK) and 177–352 (IKVA…NQRA). GTP-binding positions include 10-17 (GRPNVGKS), 57-61 (DTGGI), 120-123 (NKVD), 183-190 (GKPNVGKS), 230-234 (DTAGL), and 295-298 (NKWD). The KH-like domain maps to 353–437 (MRVPTGGLNE…PIRFIYREKS (85 aa)).

The protein belongs to the TRAFAC class TrmE-Era-EngA-EngB-Septin-like GTPase superfamily. EngA (Der) GTPase family. As to quaternary structure, associates with the 50S ribosomal subunit.

GTPase that plays an essential role in the late steps of ribosome biogenesis. This chain is GTPase Der, found in Alkaliphilus metalliredigens (strain QYMF).